We begin with the raw amino-acid sequence, 394 residues long: Elongation factor Tu 2 (394 aa).

Residues 10–204 (KPHVNVGTIG…ALDTYIPEPA (195 aa)) form the tr-type G domain. Residues 19 to 26 (GHVDHGKT) form a G1 region. 19–26 (GHVDHGKT) contributes to the GTP binding site. Threonine 26 contributes to the Mg(2+) binding site. Residues 60-64 (GITIN) form a G2 region. Residues 81–84 (DCPG) form a G3 region. GTP is bound by residues 81 to 85 (DCPGH) and 136 to 139 (NKCD). Residues 136 to 139 (NKCD) form a G4 region. Residues 174–176 (SAL) are G5.

The protein belongs to the TRAFAC class translation factor GTPase superfamily. Classic translation factor GTPase family. EF-Tu/EF-1A subfamily. In terms of assembly, monomer.

It localises to the cytoplasm. It catalyses the reaction GTP + H2O = GDP + phosphate + H(+). Its function is as follows. GTP hydrolase that promotes the GTP-dependent binding of aminoacyl-tRNA to the A-site of ribosomes during protein biosynthesis. This chain is Elongation factor Tu 2, found in Shewanella frigidimarina (strain NCIMB 400).